We begin with the raw amino-acid sequence, 361 residues long: Peptide chain release factor 1 (361 aa).

Gln-235 carries the post-translational modification N5-methylglutamine.

Belongs to the prokaryotic/mitochondrial release factor family. Post-translationally, methylated by PrmC. Methylation increases the termination efficiency of RF1.

It is found in the cytoplasm. Functionally, peptide chain release factor 1 directs the termination of translation in response to the peptide chain termination codons UAG and UAA. This is Peptide chain release factor 1 from Xanthomonas campestris pv. campestris (strain 8004).